The chain runs to 271 residues: Chitinase 6 (271 aa).

A signal peptide spans 1-20 (MARRLSLLAVVLAMVAAVSA). Residues 25-60 (AQSCGCASDQCCSKWGFCGTGSDYCGTGCQAGPCDV) form the Chitin-binding type-1 domain. Cystine bridges form between cysteine 28-cysteine 36, cysteine 30-cysteine 42, cysteine 35-cysteine 49, cysteine 88-cysteine 137, cysteine 150-cysteine 159, and cysteine 239-cysteine 271. Glutamate 132 acts as the Proton donor in catalysis. N-linked (GlcNAc...) asparagine glycosylation occurs at asparagine 268.

It belongs to the glycosyl hydrolase 19 family. Chitinase class IV subfamily. Expressed in roots, leaves, sheaths and meristems.

The catalysed reaction is Random endo-hydrolysis of N-acetyl-beta-D-glucosaminide (1-&gt;4)-beta-linkages in chitin and chitodextrins.. In terms of biological role, may function in reproductive organs during embryogenesis and seed maturation. The protein is Chitinase 6 (Cht6) of Oryza sativa subsp. japonica (Rice).